A 502-amino-acid polypeptide reads, in one-letter code: T-complex protein 11-like X-linked protein 2 (502 aa).

Residues 1 to 36 (MPKTEETVLQNDPSVAENGAPEPKTPGQSQKSKSFC) form a disordered region.

Belongs to the TCP11 family.

The protein is T-complex protein 11-like X-linked protein 2 of Homo sapiens (Human).